Reading from the N-terminus, the 385-residue chain is Putative glutamate--cysteine ligase 2 (385 aa).

It belongs to the glutamate--cysteine ligase type 2 family. YbdK subfamily.

The catalysed reaction is L-cysteine + L-glutamate + ATP = gamma-L-glutamyl-L-cysteine + ADP + phosphate + H(+). Functionally, ATP-dependent carboxylate-amine ligase which exhibits weak glutamate--cysteine ligase activity. In Herpetosiphon aurantiacus (strain ATCC 23779 / DSM 785 / 114-95), this protein is Putative glutamate--cysteine ligase 2.